The chain runs to 549 residues: Chaperonin GroEL (549 aa).

ATP-binding positions include 30–33, Lys-51, 87–91, Gly-415, and Asp-495; these read TLGP and DGTTT.

The protein belongs to the chaperonin (HSP60) family. In terms of assembly, forms a cylinder of 14 subunits composed of two heptameric rings stacked back-to-back. Interacts with the co-chaperonin GroES.

The protein localises to the cytoplasm. The catalysed reaction is ATP + H2O + a folded polypeptide = ADP + phosphate + an unfolded polypeptide.. Together with its co-chaperonin GroES, plays an essential role in assisting protein folding. The GroEL-GroES system forms a nano-cage that allows encapsulation of the non-native substrate proteins and provides a physical environment optimized to promote and accelerate protein folding. The sequence is that of Chaperonin GroEL from Hahella chejuensis (strain KCTC 2396).